A 358-amino-acid chain; its full sequence is Probable butyrate kinase (358 aa).

This sequence belongs to the acetokinase family.

Its subcellular location is the cytoplasm. The catalysed reaction is butanoate + ATP = butanoyl phosphate + ADP. In Oceanobacillus iheyensis (strain DSM 14371 / CIP 107618 / JCM 11309 / KCTC 3954 / HTE831), this protein is Probable butyrate kinase.